The primary structure comprises 395 residues: MLPAVGSVDEEEDPAEEDCPELVPIETTQSEEEEKSGLGAKIPVTIITGYLGAGKTTLLNYILTEQHSKRVAVILNESGEGSALEKSLAVSQGGELYEEWLELRNGCLCCSVKDNGLRAIENLMQKKGKFDDILLETTGLADPGAVASMFWVDAELGSDIYLDGIITIVDSKYGLKHLTEEKPDGLINEATRQVALADIILINKTDLVPEEDVKKLRTTLRSINGLGQILETQRSRVDLSNVLDLHAFDSLSGISLQKKLQHVPGTQPHLDQSIVTITFDVPGNAKEEHLNMFIQNLLWEKNVRNKDNHCMEVIRLKGLVSIKDKSQQVIVQGVHELCDLEETPVSWKDDTERTNRLVLIGRNLDKDILKQLFIATVTETEKQWTTHFKEDQVCT.

A disordered region spans residues M1 to L22. Acidic residues predominate over residues V8 to P20. Residues E17 to P24 carry the psi-PxLVp motif motif. Residue G49–T56 participates in GTP binding. Zn(2+) contacts are provided by C107, C109, and C110. The short motif at C107–C110 is the CXCC motif element. GTP is bound by residues C110–D114 and N203–D206. A CobW C-terminal domain is found at I274–V377.

The protein belongs to the SIMIBI class G3E GTPase family. ZNG1 subfamily.

Its subcellular location is the nucleus. It carries out the reaction GTP + H2O = GDP + phosphate + H(+). Functionally, zinc chaperone that directly transfers zinc cofactor to target metalloproteins, thereby activating them. Catalyzes zinc insertion into the active site of methionine aminopeptidase METAP1, which function to cleave the initiator methionine from polypeptides during or after protein translation. Mechanistically, the N-terminal psi-PxLVp motif binds to the C6H2-type zinc finger of inactive form of METAP1. After formation of the docked complex, zinc is transferred from the CXCC motif in the GTPase domain of ZNG1F to the zinc binding site in the peptidase domain of METAP1 in a process requiring GTP hydrolysis. GTP/GDP exchange is required for release of active METAP1. The chain is Zinc-regulated GTPase metalloprotein activator 1F from Homo sapiens (Human).